The primary structure comprises 681 residues: PWWP domain-containing DNA repair factor 3B (681 aa).

Positions Asn102–Val121 are enriched in polar residues. Disordered stretches follow at residues Asn102–Asp144, His166–Lys200, and Gln285–Ser304. Phosphoserine is present on Ser128. Residues Gln285 to Gly302 show a composition bias toward polar residues. The PWWP domain maps to Thr377 to Ala438.

It belongs to the PWWP3A family.

The chain is PWWP domain-containing DNA repair factor 3B (Pwwp3b) from Mus musculus (Mouse).